The sequence spans 264 residues: Origin recognition complex subunit 6 (264 aa).

Belongs to the ORC6 family. As to quaternary structure, ORC is composed of six subunits. ORC interacts with cdc18, recruiting it to the ars1 origin of replication.

The protein resides in the nucleus. In terms of biological role, component of the origin recognition complex (ORC) that binds origins of replication. It has a role in both chromosomal replication and mating type transcriptional silencing. ORC binds to multiple sites within the ars1 origin of DNA replication in an ATP-independent manner. The sequence is that of Origin recognition complex subunit 6 (orc6) from Schizosaccharomyces pombe (strain 972 / ATCC 24843) (Fission yeast).